We begin with the raw amino-acid sequence, 271 residues long: Short chain dehydrogenase virK (271 aa).

Leu-13, Asp-59, Asn-87, Tyr-168, Lys-172, Val-201, and Thr-203 together coordinate NADP(+). Residue Tyr-168 is the Proton donor of the active site. Lys-172 (lowers pKa of active site Tyr) is an active-site residue.

The protein belongs to the short-chain dehydrogenases/reductases (SDR) family.

Its pathway is secondary metabolite biosynthesis. In terms of biological role, short chain dehydrogenase; part of the gene cluster that mediates the biosynthesis of virensols and trichoxide, fungal natural products that contain or are derived from a salicylaldehyde core. The pathway begins with the synthesis of the reduced chain in virensol C by the highly reducing polyketide synthase virA via condensation of one acetate and 8 malonate units. VirA has interesting programming rules since the first 2 ketides are fully reduced, the 3 following ketides undergo beta-dehydration, and the last 3 ketides are only reduced to beta-hydroxys to yield the trihydroxy portion. The production of aldehyde virensol C by virA alone is surprising, since virA does not contain a reductase (R) domain that is typically associated with reductive product release in HRPKS. The cupin-domain enzyme virC is involved in enhancing virA product turnover. The short-chain dehydrogenase virB then oxidizes the C-7 alcohol of virensol C to a ketone, yielding virensol D. Virensol D is further transformed to salicylaldehyde 5-deoxyaurocitrin by the short-chain dehydrogenase virD. VirD catalyzes the dehydrogenation of C-3 to form the beta-ketone aldehyde, which is followed by the generation of the nucleophilic C-2 that is required for the intramolecular aldol condensation between C-2 and C-7, itself followed by dehydration and aromatization which leads to salicylaldehyde 5-deoxyaurocitrin. While the dehydrogenation of virensol D is definitely catalyzed by virD, the aldol condensation and dehydration may be uncatalyzed or assisted by virD. The short chain dehydrogenase virG then converts salicylaldehyde 5-deoxyaurocitrin into virensol B which is further hydroxylated by the cytochrome P450 monooxygenase virE to yield the hydroquinone virensol A. VirI then may oxidize virensol A to form the quinone, while virH performs the epoxidation. Finally, the two remaining short-chain dehydrogenases, virK and virL, are probably responsible for reducing the ketones to the corresponding alcohols to furnish the epoxycyclohexanol structure in trichoxide. The sequence is that of Short chain dehydrogenase virK from Hypocrea virens (strain Gv29-8 / FGSC 10586) (Gliocladium virens).